The primary structure comprises 176 residues: ATP-dependent protease subunit HslV (176 aa).

Threonine 2 is a catalytic residue. Serine 157, cysteine 160, and threonine 163 together coordinate Na(+).

The protein belongs to the peptidase T1B family. HslV subfamily. As to quaternary structure, a double ring-shaped homohexamer of HslV is capped on each side by a ring-shaped HslU homohexamer. The assembly of the HslU/HslV complex is dependent on binding of ATP.

The protein localises to the cytoplasm. It catalyses the reaction ATP-dependent cleavage of peptide bonds with broad specificity.. With respect to regulation, allosterically activated by HslU binding. Functionally, protease subunit of a proteasome-like degradation complex believed to be a general protein degrading machinery. This Buchnera aphidicola subsp. Baizongia pistaciae (strain Bp) protein is ATP-dependent protease subunit HslV.